The chain runs to 2208 residues: MDTFLLELKDLVRKYVPELVELSFQKDALLSQVHPRLVLVEGFKLLSLLVELESCKVNACRHNFEQKFVDVILSDHGVICPTLPKVTPDGFNLMGKTLILLETFVRVNPNDFERKWKADMSKLMSLKDDLARVGITMVPVVDGRGSYNTSYLPEWATERLRWLLIEILKGVKATSEIEIEDQEYQRLIHSLAKANNQSMGFENLEFLKRRLLSYDQLLDTSLLVGIRNDVRESKIIEELIKIKLWYKTEIFNKGLGKFKRTNKSNLLSDLLKIGLHQDSDTINCMFCSCKILELCYTLSNKLSIDHSKEEMKDDEVGGKQPVCISYSSLLSICNKIKGSKIFNTRRNTLLFLDLIMLNFIVDEMIQDDSVVDSLRGAGFIIGQMVVLVNDRALDILAAMKLIRHKLGNSKDWLSVCGKVLKRYDEEMWKEVKTYIKEPDFDMLFQLAKSLVSERPIMRYTVHKDNESRCLHQNSLNISDQSFKAMLKALSHVSLSLINSMKTSFSSRLLINEKDYSRYYGNVRLKECYVQRFPISSRVTGYLFYQKTGERSRCYSLYISENGELSELGSFYCDPKRFFLPVFSEDTIVSMCNEMVCWLDFDEQLVELVKPKLRSLVLLLLCSPSKRNQTFIQGLRYFIMAYANQAHHVDLMSKLEIECKSSSEIQLQRLAVTLFELVLSTGDDKDFGFARRFKFLLNISYLCHFVTKETPDRLTDQIKCFEKFLEPKLNFNSVIVNPSLSGILTEAQEEIMTSSVNRFFQKNLTNISDVKEPGVSKELISFCVSLFNRGKLRVSGDLKVDPFRPSFTSTALDLSSNKSVVVPKLDELGNALSKYDKQMMISSCVTTLTEMFKTKGRYNLDPDSLDFLVLKNLSNLVSVSVSKGQMKEELSLLYDTLSEEQLESFEQIKQDVQLTLSRMKESKCNNVGLGNSRKVNKHLSKSELLETLWSPYQVLRAIKNEVSIHEIKDFDPDIIEHETVKKLCDEVYQSSNKLEFFLEEPLKSVPLEFLLKNLTTIAYEETDYLECFKYLLIQGGFDQKLGSYEHKSRSRLGLSSEALRVQEDARVSTRESNAEAIAKKLDKTFFTSAALRNLCFYSEDSPTEFTSVSTNTGNLKFGLSYKEQVGSNRELYVGDLNTKLMTRLVEDFSEMITSSMRYSCLNSEKEFERAICDMKMAVNNGDISMSLDHSKWGPHMSPALFYSFLANLNLTEPKSRAKLNLGPLLDILKWHLHKVVEVPFNVAQAYCVGKIKRSLGLMECQTSSVTEQFYHNFLQRENEIPSHIMSVLDMGQGILHNLSDLYALITEQFLNYAIYKLYDVDVLSYTSSDDQISIMKLPAYEHIDEDSPDWLEIVCFHEYLSSKLNKFVSPKSVVGNFVAEFKSRFFVMGEETPLLTKFVAAALHNVRCKTPTQLAETVDTICDQCVANGVSVSIVSKISERVNRLVKYSGFGETPFLSVVKQDVKDWSDGSRGYRLQRNIENSLRDSKILEVMRKGARKVFLGIKNGRIFEENLIGLIGRGGDEALRGFLLYAEVDKDEIENALRYRWVNTSTFGDLRLVLRTKIMSSKRVLERESIPSLVKTLQSRMSKNFTKGAKKILAESINKSAFQSSVASGFIGFCKSMGSKCVRDGSGGFIYLKDIYKKITTCECKHCSVWRGVVYCEKSVEKIFQFTRSIMWDYFTLVLTNACELGEWVFSSVKLPTKATILDNPNLFWAIKPRTHKHIEDRLGLNHILHSIKKNYPQLFEEHLAPFMSDLQSNQMINPSKIKFLDICVALDMVNENLGIIGHLLRGRNNTIYIVKQSECAGAHVRQADYVDQDLGLSPQQICYNFKVQFLLSSMINPLIVSTSTLRSFFWFNEVLSIEEDDQIELGELTDFTLSIKTYNLERAMTLDDMTMGYVCSTLLDEVVSLESLDSCQDLAALQFKRQDLSDFFRDLGEDFVKVGLNIQIVHQRRSTKFDISRKVVYTFRILLLINLSEHLREEVKIPVQSLSLYASGAGNNHLFLDGVSMIPTLPLFNGSKSVNLAKVLIEHELATSNDFKLLECVIMDFSNFLDELRDKYSYVLVGPEEQENPIVFQNGAFMADNQKLSYMRVEIFGDTIVKALGALETDREIENLLCNLWPYLKSIKKTIDFNQADFEMIYDLHRTALLKSLCQMDSWIEFTSFSVAYSKHLQDLVVSDNLGNLRLKGITCRPFRRDQCIQEIE.

Positions 26–284 are endonuclease; it reads KDALLSQVHP…LHQDSDTINC (259 aa). Positions 51, 89, and 102 each coordinate Mn(2+). K115 is a catalytic residue. In terms of domain architecture, RdRp catalytic spans 1171 to 1367; the sequence is CDMKMAVNNG…YLSSKLNKFV (197 aa). A Mg(2+)-binding site is contributed by D1329.

It belongs to the Bunyavirales RNA polymerase family. Homomultimer; the oligomeric structure is essential for the polymerase activity. Interacts with nucleoprotein N. Interacts with protein Z; this interaction inhibits viral transcription and replication, Z partially blocks the product exit tunnel for the releasing nascent RNA product. It depends on Mn(2+) as a cofactor. Mg(2+) is required as a cofactor.

Its subcellular location is the virion. It localises to the host cytoplasm. It carries out the reaction RNA(n) + a ribonucleoside 5'-triphosphate = RNA(n+1) + diphosphate. Its function is as follows. RNA-dependent RNA polymerase, which is responsible for the replication and transcription of the viral RNA genome using antigenomic RNA as an intermediate. During transcription, synthesizes subgenomic RNAs and assures their capping by a cap-snatching mechanism, which involves the endonuclease activity cleaving the host capped pre-mRNAs. These short capped RNAs are then used as primers for viral transcription. The 3'-end of subgenomic mRNAs molecules are heterogeneous and not polyadenylated. The replicase function is to direct synthesis of antigenomic and genomic RNA which are encapsidated and non capped. As a consequence of the use of the same enzyme for both transcription and replication, these mechanisms need to be well coordinated. These processes may be regulated by proteins N and Z in a dose-dependent manner. Z protein inhibits the viral polymerase L und thus the viral transcription and RNA synthesis. The polypeptide is RNA-directed RNA polymerase L (Homo sapiens (Human)).